Here is a 332-residue protein sequence, read N- to C-terminus: Delta-aminolevulinic acid dehydratase (332 aa).

The Schiff-base intermediate with substrate role is filled by Lys199. Residues Arg209 and Lys221 each coordinate 5-aminolevulinate. Glu237 serves as a coordination point for Mg(2+). Lys252 functions as the Schiff-base intermediate with substrate in the catalytic mechanism. Ser278 and Tyr317 together coordinate 5-aminolevulinate.

It belongs to the ALAD family. In terms of assembly, homooctamer.

It carries out the reaction 2 5-aminolevulinate = porphobilinogen + 2 H2O + H(+). Its pathway is porphyrin-containing compound metabolism; protoporphyrin-IX biosynthesis; coproporphyrinogen-III from 5-aminolevulinate: step 1/4. In terms of biological role, catalyzes an early step in the biosynthesis of tetrapyrroles. Binds two molecules of 5-aminolevulinate per subunit, each at a distinct site, and catalyzes their condensation to form porphobilinogen. The sequence is that of Delta-aminolevulinic acid dehydratase (hemB) from Chlamydia pneumoniae (Chlamydophila pneumoniae).